The chain runs to 339 residues: tRNA N6-adenosine threonylcarbamoyltransferase (339 aa).

The Fe cation site is built by histidine 111 and histidine 115. Residues 139–143 (LVSGG), aspartate 172, glycine 185, aspartate 189, and asparagine 280 each bind substrate. Aspartate 308 provides a ligand contact to Fe cation.

This sequence belongs to the KAE1 / TsaD family. Fe(2+) is required as a cofactor.

Its subcellular location is the cytoplasm. The catalysed reaction is L-threonylcarbamoyladenylate + adenosine(37) in tRNA = N(6)-L-threonylcarbamoyladenosine(37) in tRNA + AMP + H(+). Functionally, required for the formation of a threonylcarbamoyl group on adenosine at position 37 (t(6)A37) in tRNAs that read codons beginning with adenine. Is involved in the transfer of the threonylcarbamoyl moiety of threonylcarbamoyl-AMP (TC-AMP) to the N6 group of A37, together with TsaE and TsaB. TsaD likely plays a direct catalytic role in this reaction. This chain is tRNA N6-adenosine threonylcarbamoyltransferase, found in Phocaeicola vulgatus (strain ATCC 8482 / DSM 1447 / JCM 5826 / CCUG 4940 / NBRC 14291 / NCTC 11154) (Bacteroides vulgatus).